Consider the following 454-residue polypeptide: Chromosomal replication initiator protein DnaA (454 aa).

Residues 1–83 (MTEKEHFFWN…IKVEYVFDEA (83 aa)) form a domain I, interacts with DnaA modulators region. The tract at residues 83–113 (ALVSETKPTLANNDFSNKREQQTPDLPTLNS) is domain II. Residues 114–332 (DLNSKYTFDN…GALKDISLVA (219 aa)) are domain III, AAA+ region. ATP is bound by residues Gly158, Gly160, Lys161, and Thr162. The tract at residues 333–454 (NVRQLDTITV…EIDTIKNKIK (122 aa)) is domain IV, binds dsDNA.

This sequence belongs to the DnaA family. As to quaternary structure, oligomerizes as a right-handed, spiral filament on DNA at oriC.

Its subcellular location is the cytoplasm. In terms of biological role, plays an essential role in the initiation and regulation of chromosomal replication. ATP-DnaA binds to the origin of replication (oriC) to initiate formation of the DNA replication initiation complex once per cell cycle. Binds the DnaA box (a 9 base pair repeat at the origin) and separates the double-stranded (ds)DNA. Forms a right-handed helical filament on oriC DNA; dsDNA binds to the exterior of the filament while single-stranded (ss)DNA is stabiized in the filament's interior. The ATP-DnaA-oriC complex binds and stabilizes one strand of the AT-rich DNA unwinding element (DUE), permitting loading of DNA polymerase. After initiation quickly degrades to an ADP-DnaA complex that is not apt for DNA replication. Binds acidic phospholipids. The chain is Chromosomal replication initiator protein DnaA from Streptococcus thermophilus (strain ATCC BAA-250 / LMG 18311).